Consider the following 323-residue polypeptide: Ethanolamine-phosphate cytidylyltransferase (323 aa).

Belongs to the cytidylyltransferase family.

The protein resides in the cytoplasm. It localises to the nucleus. It carries out the reaction phosphoethanolamine + CTP + H(+) = CDP-ethanolamine + diphosphate. It functions in the pathway phospholipid metabolism; phosphatidylethanolamine biosynthesis; phosphatidylethanolamine from ethanolamine: step 2/3. Ethanolamine-phosphate cytidylyltransferase which catalyzes the second step of phosphatidylethanolamine biosynthesis. Involved in the maintenance of plasma membrane and required for proper sporulation. This Saccharomyces cerevisiae (strain ATCC 204508 / S288c) (Baker's yeast) protein is Ethanolamine-phosphate cytidylyltransferase.